A 473-amino-acid polypeptide reads, in one-letter code: UDP-glycosyltransferase 71A27 (473 aa).

Residue His-15 is the Proton acceptor of the active site. Residue His-15 participates in an anthocyanidin binding. Asp-117 (charge relay) is an active-site residue. UDP-alpha-D-glucose is bound by residues Ala-345, Gln-347, His-362, Trp-365, Asn-366, Ser-367, and Glu-370. Gly-385 is an an anthocyanidin binding site. UDP-alpha-D-glucose-binding residues include Glu-386 and Gln-387.

The protein belongs to the UDP-glycosyltransferase family.

The enzyme catalyses (20S)-protopanaxadiol + UDP-alpha-D-glucose = (20S)-ginsenoside C-K + UDP + H(+). It functions in the pathway secondary metabolite biosynthesis; terpenoid biosynthesis. Functionally, component of the triterpene saponins (e.g. PPD-type ginsenosides or panaxosides) biosynthetic pathways. Glycosyltransferase that catalyzes the biosynthesis of compound K from protopanaxadiol (PPD). This chain is UDP-glycosyltransferase 71A27, found in Panax ginseng (Korean ginseng).